The chain runs to 208 residues: FMN-dependent NADH:quinone oxidoreductase (208 aa).

FMN is bound by residues histidine 10, 17-19, 104-107, 148-153, and aspartate 184; these read SRS, MWNL, and SNGGFY.

It belongs to the azoreductase type 1 family. In terms of assembly, homodimer. It depends on FMN as a cofactor.

The enzyme catalyses 2 a quinone + NADH + H(+) = 2 a 1,4-benzosemiquinone + NAD(+). The catalysed reaction is N,N-dimethyl-1,4-phenylenediamine + anthranilate + 2 NAD(+) = 2-(4-dimethylaminophenyl)diazenylbenzoate + 2 NADH + 2 H(+). Functionally, quinone reductase that provides resistance to thiol-specific stress caused by electrophilic quinones. Its function is as follows. Also exhibits azoreductase activity. Catalyzes the reductive cleavage of the azo bond in aromatic azo compounds to the corresponding amines. Requires NADH, but not NADPH, as an electron donor for its activity. The enzyme can also reduce a wide range of sulfonated azo dyes. The substrate preference order is methyl Red &gt; Orange II &gt; Ponceau BS &gt; Ponceau S &gt; Orange G &gt; Amaranth. The sequence is that of FMN-dependent NADH:quinone oxidoreductase from Enterococcus faecalis (strain ATCC 700802 / V583).